Reading from the N-terminus, the 158-residue chain is Glycine-rich RNA-binding protein 2, mitochondrial (158 aa).

Residues 1–34 (MAFCNKLGGLLRQNISSNGNVPVTSMLGSLRLMS) constitute a mitochondrion transit peptide. The 79-residue stretch at 35–113 (TKLFIGGLSW…RHIRVNPAND (79 aa)) folds into the RRM domain. S43 is modified (phosphoserine). The tract at residues 122–157 (GGGGGYSGGGGGYGGGGGGYGGGGGGYGGGGDGGGG) is glycine-rich (GR) required for cell-to-cell movement.

This sequence belongs to the GR-RBP family. As to quaternary structure, binds to small phloem-mobile single-stranded RNAs (ss-sRNA, e.g. small interfering RNA (siRNA) and microRNA (miRNA)) in the phloeme exudate, including viral-derived sRNA (vsiRNA). Interacts with ORRM2, RBG3/ORRM3 and RBG5/ORRM4.

It localises to the mitochondrion. It is found in the secreted. In terms of biological role, promotes the cis-splicing and editing of several mitochondrial RNAs (including NAD5 transcripts). Plays a role in RNA transcription or processing during stress. Binds RNAs and DNAs sequence with a preference to single-stranded nucleic acids. Displays strong affinity to poly(U) sequence. Exerts cold and freezing tolerance, probably by exhibiting an RNA chaperone activity during the cold and freezing adaptation process. Mediates cell-to-cell trafficking of RNA interference (RNAi) signals (small RNAs (sRNA), e.g. small interfering RNA (siRNA) and microRNA (miRNA)) which regulate growth and development, as well as responses to environmental inputs, including pathogen attack; can compromise zucchini yellow mosaic virus (ZYMV) and tobacco rattle virus (TRV) infections at the early stage. In Arabidopsis thaliana (Mouse-ear cress), this protein is Glycine-rich RNA-binding protein 2, mitochondrial.